A 665-amino-acid chain; its full sequence is Anaphase-promoting complex subunit 3 (665 aa).

Residues 115-148 form a TPR 1 repeat; the sequence is SCMLDVLGTMYKKAGFLKKATDCFVEAVSINPYN. Residues 191 to 257 mediate DNA binding; it reads VPEPSFLKKS…HQSLKLQSQS (67 aa). 8 TPR repeats span residues 329–362, 363–396, 431–464, 466–498, 499–532, 534–566, 568–600, and 601–634; these read LLKLFGKGVYLLAQYKLREALNCFQSLPIEQQNT, PFVLAKLGITYFELVDYEKSEEVFQKLRDLSPSR, PESWCILANCFSLQREHSQALKCINRAIQLDPTF, YAYTLQGHEHSANEEYEKSKTSFRKAIRVNVRH, YNAWYGLGMVYLKTGRNDQADFHFQRAAEINPNN, VLITCIGMIYERCKDYKKALDFYDRACKLDEKS, LARFKKAKVLILLHDHDKALVELEQLKAIAPDE, and ANVHFLLGKIFKQMRKKNLALKHFTIAWNLDGKA.

The protein belongs to the APC3/CDC27 family. In terms of assembly, the APC/C is composed of at least 13 subunits: apc1, apc2, nuc2, apc4, apc5, cut9, apc8, apc10, apc11, hcn1, apc13, apc14 and apc15. Interacts with apc10 and cut9.

It localises to the nucleus. In terms of biological role, component of the anaphase-promoting complex/cyclosome (APC/C), a cell cycle-regulated E3 ubiquitin-protein ligase complex that controls progression through mitosis and the G1 phase of the cell cycle. The APC/C is thought to confer substrate specificity and, in the presence of ubiquitin-conjugating E2 enzymes, it catalyzes the formation of protein-ubiquitin conjugates that are subsequently degraded by the 26S proteasome. Interacts with spindle apparatus, chromosomes, or nuclear envelope, and interconnect nuclear and cytoskeletal functions in mitosis, so the elongation of the spindle in anaphase is blocked. The chain is Anaphase-promoting complex subunit 3 (nuc2) from Schizosaccharomyces pombe (strain 972 / ATCC 24843) (Fission yeast).